The sequence spans 143 residues: AP-2 complex subunit sigma (143 aa).

This sequence belongs to the adaptor complexes small subunit family. In terms of assembly, adaptor protein complex 2 (AP-2) is a heterotetramer composed of two large adaptins (alpha-type subunit APL3 and beta-type subunit APL1), a medium chain (mu-type subunit APM4) and a small adaptin (sigma-type subunit APS2).

The protein localises to the cell membrane. The protein resides in the membrane. Its subcellular location is the coated pit. Its function is as follows. Component of the adaptor complexes which link clathrin to receptors in coated vesicles. Clathrin-associated protein complexes are believed to interact with the cytoplasmic tails of membrane proteins, leading to their selection and concentration. In Neurospora crassa (strain ATCC 24698 / 74-OR23-1A / CBS 708.71 / DSM 1257 / FGSC 987), this protein is AP-2 complex subunit sigma (aps-2).